The chain runs to 196 residues: MSYYAFEGLIPVVHPTAFVHPSAVLIGDVIVGAGVYIGPLASLRGDYGRLLVQAGANIQDGCIMHGYCDTDTIVGENGHIGHGAILHGCVIGRDALVGMNSVIMDGAVIGEESIVAAMSFVKAGFRGEKRQLLMGTPARAVRSVSDDELHWKRLNTKEYQDLVGRCHASLHETQPLRQMEGNRPRLQGTTDVAPKR.

Positions 173-196 (TQPLRQMEGNRPRLQGTTDVAPKR) are disordered.

It belongs to the transferase hexapeptide repeat family.

It functions in the pathway amine and polyamine metabolism; carnitine metabolism. Overproduction of CaiE stimulates the activity of CaiB and CaiD. This Escherichia coli (strain SMS-3-5 / SECEC) protein is Carnitine operon protein CaiE.